The sequence spans 266 residues: Glucagon-1 (266 aa).

The signal sequence occupies residues 1–20 (MKSTCYMIGILLMILQNTYQ). 6 propeptides span residues 21 to 50 (SPVP…LKEV), 84 to 95 (SGELSRRNADYE), 136 to 140 (NAEFE), 175 to 178 (IRYS), 213 to 224 (NFSEVHSVEEMD), and 261 to 266 (DLLEEQ). A compositionally biased stretch (polar residues) spans 23–32 (VPETDANSRS). The segment at 23 to 44 (VPETDANSRSVKAARNEAVDDS) is disordered.

This sequence belongs to the glucagon family.

It localises to the secreted. Functionally, promotes hydrolysis of glycogen and lipids, and raises the blood sugar level. In Xenopus laevis (African clawed frog), this protein is Glucagon-1 (gcg1).